The following is a 442-amino-acid chain: uncharacterized protein (442 aa).

A disordered region spans residues 211-269 (LDYSTDKPEDSESEDIELEDSESEDSESEDIDQHGGQGPDDDEFNANFDDPQFDEFDFG). The segment covering 221-240 (SESEDIELEDSESEDSESED) has biased composition (acidic residues).

The protein resides in the virion. This is an uncharacterized protein from Acanthamoeba polyphaga (Amoeba).